Consider the following 131-residue polypeptide: MSWQAYVDEHLMCEIEGHHLASAAILGHDGTVWAQSADFPQFKPEEITGIMKDFDEPGHLAPTGMFVATAKYMVIQGEPGAVIRGKKGAGGITIKKTGQALVVGIYDEPMTPGQCNMVVERLGDYLVKQGL.

Cys-13 and Cys-115 are oxidised to a cystine. An Involved in PIP2 interaction motif is present at residues 81–97 (AVIRGKKGAGGITIKKT). At Thr-111 the chain carries Phosphothreonine.

It belongs to the profilin family. In terms of assembly, occurs in many kinds of cells as a complex with monomeric actin in a 1:1 ratio. Post-translationally, phosphorylated by MAP kinases.

It is found in the cytoplasm. The protein localises to the cytoskeleton. Functionally, binds to actin and affects the structure of the cytoskeleton. At high concentrations, profilin prevents the polymerization of actin, whereas it enhances it at low concentrations. The protein is Profilin-8 of Olea europaea (Common olive).